Consider the following 513-residue polypeptide: Meiotically up-regulated gene 133 protein (513 aa).

The protein belongs to the UPF0300 family.

It localises to the golgi apparatus. It is found in the vacuole membrane. Functionally, has a role in meiosis. This is Meiotically up-regulated gene 133 protein (mug133) from Schizosaccharomyces pombe (strain 972 / ATCC 24843) (Fission yeast).